A 247-amino-acid chain; its full sequence is tRNA uridine(34) hydroxylase (247 aa).

The Rhodanese domain occupies 124 to 218; the sequence is TQQDVIVIDT…YLEDTQNKNN (95 aa). C178 serves as the catalytic Cysteine persulfide intermediate.

It belongs to the TrhO family.

The enzyme catalyses uridine(34) in tRNA + AH2 + O2 = 5-hydroxyuridine(34) in tRNA + A + H2O. Its function is as follows. Catalyzes oxygen-dependent 5-hydroxyuridine (ho5U) modification at position 34 in tRNAs. In Rickettsia conorii (strain ATCC VR-613 / Malish 7), this protein is tRNA uridine(34) hydroxylase.